The following is a 146-amino-acid chain: Prefoldin subunit alpha (146 aa).

This sequence belongs to the prefoldin alpha subunit family. As to quaternary structure, heterohexamer of two alpha and four beta subunits.

Its subcellular location is the cytoplasm. Its function is as follows. Molecular chaperone capable of stabilizing a range of proteins. Seems to fulfill an ATP-independent, HSP70-like function in archaeal de novo protein folding. This is Prefoldin subunit alpha from Methanobrevibacter smithii (strain ATCC 35061 / DSM 861 / OCM 144 / PS).